We begin with the raw amino-acid sequence, 417 residues long: Actin-related protein 10 (417 aa).

Belongs to the actin family. Subunit of dynactin, a multiprotein complex part of a tripartite complex with dynein and a adapter, such as BICDL1, BICD2 or HOOK3. The dynactin complex is built around ACTR1A/ACTB filament and consists of an actin-related filament composed of a shoulder domain, a pointed end and a barbed end. Its length is defined by its flexible shoulder domain. The soulder is composed of 2 DCTN1 subunits, 4 DCTN2 and 2 DCTN3. The 4 DCNT2 (via N-terminus) bind the ACTR1A filament and act as molecular rulers to determine the length. The pointed end is important for binding dynein-dynactin cargo adapters. Consists of 4 subunits: ACTR10, DCNT4, DCTN5 and DCTN6. The barbed end is composed of a CAPZA1:CAPZB heterodimers, which binds ACTR1A/ACTB filament and dynactin and stabilizes dynactin.

It is found in the cytoplasm. It localises to the cytoskeleton. Part of the dynactin complex that activates the molecular motor dynein for ultra-processive transport along microtubules. The protein is Actin-related protein 10 (ACTR10) of Homo sapiens (Human).